The primary structure comprises 258 residues: Venom plasminogen activator Haly-PA (258 aa).

Positions Met-1–Ala-18 are cleaved as a signal peptide. Positions Gln-19–Leu-24 are excised as a propeptide. The Peptidase S1 domain maps to Val-25–Ala-249. 6 disulfides stabilise this stretch: Cys-31–Cys-163, Cys-50–Cys-66, Cys-98–Cys-256, Cys-142–Cys-210, Cys-174–Cys-189, and Cys-200–Cys-225. Asn-44 is a glycosylation site (N-linked (GlcNAc...) asparagine). Catalysis depends on charge relay system residues His-65 and Asp-110. The Charge relay system role is filled by Ser-204.

The protein belongs to the peptidase S1 family. Snake venom subfamily. As to quaternary structure, monomer. Glycosylated. In terms of tissue distribution, expressed by the venom gland.

It is found in the secreted. Functionally, snake venom serine protease that activates plasminogen. Displays indirect fibrino(geno)lytic activity through conversion of plasminogen to plasmin. Shows a preferential cleavage at Arg-|-Xaa instead of Lys-|-Xaa bonds. The chain is Venom plasminogen activator Haly-PA from Gloydius brevicauda (Korean slamosa snake).